Here is a 284-residue protein sequence, read N- to C-terminus: Avenin-like b8 (284 aa).

The signal sequence occupies residues 1–18 (MKVFILALLALAATTAIA).

It belongs to the prolamin family. In terms of processing, contains disulfide bonds.

In terms of biological role, seed storage protein. Might be integrated via inter-chain disulfide bonds within the glutenin polymer. In Triticum aestivum (Wheat), this protein is Avenin-like b8.